We begin with the raw amino-acid sequence, 311 residues long: 4-diphosphocytidyl-2-C-methyl-D-erythritol kinase (311 aa).

Lysine 13 is an active-site residue. 114-124 (PVAGGMAGGSA) contributes to the ATP binding site. The active site involves aspartate 156.

Belongs to the GHMP kinase family. IspE subfamily.

The catalysed reaction is 4-CDP-2-C-methyl-D-erythritol + ATP = 4-CDP-2-C-methyl-D-erythritol 2-phosphate + ADP + H(+). It functions in the pathway isoprenoid biosynthesis; isopentenyl diphosphate biosynthesis via DXP pathway; isopentenyl diphosphate from 1-deoxy-D-xylulose 5-phosphate: step 3/6. Catalyzes the phosphorylation of the position 2 hydroxy group of 4-diphosphocytidyl-2C-methyl-D-erythritol. The protein is 4-diphosphocytidyl-2-C-methyl-D-erythritol kinase of Corynebacterium diphtheriae (strain ATCC 700971 / NCTC 13129 / Biotype gravis).